Reading from the N-terminus, the 50-residue chain is Omega-conotoxin Bu8 (50 aa).

A1 is a signal peptide. A propeptide spanning residues E2–R24 is cleaved from the precursor. 3 cysteine pairs are disulfide-bonded: C25/C40, C32/C44, and C39/C49. Residue C49 is modified to Cysteine amide.

Belongs to the conotoxin O1 superfamily. In terms of tissue distribution, expressed by the venom duct.

Its subcellular location is the secreted. Omega-conotoxins act at presynaptic membranes, they bind and block voltage-gated calcium channels (Cav). This toxin selectively and potently inhibits depolarization-activated rat Cav2.2/CACNA1B currents (IC(50)=89 nM), when coexpressed with alpha-2/delta-1 (CACNA2D1) and beta-3 (CACNB3) subunits. In vivo, is lethal to fish and displays potent analgesic activity in mice pain models of hot plate and acetic acid writhing but has fewer side effects on mouse motor function and lower toxicity in goldfish. Shows higher or similar analgesic activity in the pain models mentioned above compared to MVIIA, and lower side effects. In addition, it blocks Cav2.2/CACNA1B more rapidly than MVIIA and also dissociates more rapidly. The chain is Omega-conotoxin Bu8 from Conus bullatus (Bubble cone).